We begin with the raw amino-acid sequence, 331 residues long: Protein RecA (331 aa).

66–73 (GPESSGKT) is an ATP binding site.

The protein belongs to the RecA family.

It localises to the cytoplasm. In terms of biological role, can catalyze the hydrolysis of ATP in the presence of single-stranded DNA, the ATP-dependent uptake of single-stranded DNA by duplex DNA, and the ATP-dependent hybridization of homologous single-stranded DNAs. It interacts with LexA causing its activation and leading to its autocatalytic cleavage. This chain is Protein RecA, found in Lactobacillus delbrueckii subsp. bulgaricus (strain ATCC 11842 / DSM 20081 / BCRC 10696 / JCM 1002 / NBRC 13953 / NCIMB 11778 / NCTC 12712 / WDCM 00102 / Lb 14).